The following is a 370-amino-acid chain: Queuine tRNA-ribosyltransferase (370 aa).

Asp-89 serves as the catalytic Proton acceptor. Substrate is bound by residues 89-93 (DSGGF), Asp-143, Gln-185, and Gly-212. Residues 243 to 249 (GVGKPED) form an RNA binding region. Asp-262 (nucleophile) is an active-site residue. Positions 267–271 (TRNAR) are RNA binding; important for wobble base 34 recognition. Residues Cys-300, Cys-302, Cys-305, and His-331 each coordinate Zn(2+).

Belongs to the queuine tRNA-ribosyltransferase family. Homodimer. Within each dimer, one monomer is responsible for RNA recognition and catalysis, while the other monomer binds to the replacement base PreQ1. It depends on Zn(2+) as a cofactor.

The catalysed reaction is 7-aminomethyl-7-carbaguanine + guanosine(34) in tRNA = 7-aminomethyl-7-carbaguanosine(34) in tRNA + guanine. The protein operates within tRNA modification; tRNA-queuosine biosynthesis. Catalyzes the base-exchange of a guanine (G) residue with the queuine precursor 7-aminomethyl-7-deazaguanine (PreQ1) at position 34 (anticodon wobble position) in tRNAs with GU(N) anticodons (tRNA-Asp, -Asn, -His and -Tyr). Catalysis occurs through a double-displacement mechanism. The nucleophile active site attacks the C1' of nucleotide 34 to detach the guanine base from the RNA, forming a covalent enzyme-RNA intermediate. The proton acceptor active site deprotonates the incoming PreQ1, allowing a nucleophilic attack on the C1' of the ribose to form the product. After dissociation, two additional enzymatic reactions on the tRNA convert PreQ1 to queuine (Q), resulting in the hypermodified nucleoside queuosine (7-(((4,5-cis-dihydroxy-2-cyclopenten-1-yl)amino)methyl)-7-deazaguanosine). The chain is Queuine tRNA-ribosyltransferase from Hydrogenovibrio crunogenus (strain DSM 25203 / XCL-2) (Thiomicrospira crunogena).